A 254-amino-acid polypeptide reads, in one-letter code: Coproheme decarboxylase (254 aa).

Residues Arg-136, 150–154 (YPMDK), His-177, Gln-190, and Ser-228 contribute to the Fe-coproporphyrin III site. Tyr-150 is an active-site residue.

Belongs to the ChdC family. Type 1 subfamily. The cofactor is Fe-coproporphyrin III.

The catalysed reaction is Fe-coproporphyrin III + 2 H2O2 + 2 H(+) = heme b + 2 CO2 + 4 H2O. It catalyses the reaction Fe-coproporphyrin III + H2O2 + H(+) = harderoheme III + CO2 + 2 H2O. It carries out the reaction harderoheme III + H2O2 + H(+) = heme b + CO2 + 2 H2O. Its pathway is porphyrin-containing compound metabolism; protoheme biosynthesis. Involved in coproporphyrin-dependent heme b biosynthesis. Catalyzes the decarboxylation of Fe-coproporphyrin III (coproheme) to heme b (protoheme IX), the last step of the pathway. The reaction occurs in a stepwise manner with a three-propionate intermediate. The protein is Coproheme decarboxylase of Bacillus licheniformis (strain ATCC 14580 / DSM 13 / JCM 2505 / CCUG 7422 / NBRC 12200 / NCIMB 9375 / NCTC 10341 / NRRL NRS-1264 / Gibson 46).